The following is a 162-amino-acid chain: Shikimate kinase (162 aa).

Residue 10–15 coordinates ATP; sequence GAGKST. Position 14 (Ser-14) interacts with Mg(2+). Residues Asp-28, Arg-52, and Gly-73 each coordinate substrate. Residue Arg-113 coordinates ATP. Position 129 (Arg-129) interacts with substrate.

The protein belongs to the shikimate kinase family. Monomer. Mg(2+) is required as a cofactor.

The protein localises to the cytoplasm. The enzyme catalyses shikimate + ATP = 3-phosphoshikimate + ADP + H(+). The protein operates within metabolic intermediate biosynthesis; chorismate biosynthesis; chorismate from D-erythrose 4-phosphate and phosphoenolpyruvate: step 5/7. In terms of biological role, catalyzes the specific phosphorylation of the 3-hydroxyl group of shikimic acid using ATP as a cosubstrate. This Lactococcus lactis subsp. cremoris (strain MG1363) protein is Shikimate kinase.